The sequence spans 555 residues: Connector enhancer of kinase suppressor of ras 3 (555 aa).

The SAM domain maps to 7–72; sequence WSPKQVVDWT…LEAVDLLCAL (66 aa). Residues 80–174 enclose the CRIC domain; sequence NMKNLVLKLR…TAVQKDCLVA (95 aa). Positions 211-293 constitute a PDZ domain; that stretch reads EVHLPNVRPG…GVVLLLKKRP (83 aa). Disordered stretches follow at residues 308-333, 348-391, and 518-538; these read RWKPPLVQTSPPPTTTQSPESTMDAS, PPPA…LDQE, and PFQEEGPKKKSASSSAKASSG. Residues 311 to 329 are compositionally biased toward low complexity; that stretch reads PPLVQTSPPPTTTQSPEST. Residues 325–546 enclose the DUF1170 domain; that stretch reads SPESTMDASL…SGEPSLLVSW (222 aa). Residues S381 and S383 each carry the phosphoserine modification.

Belongs to the CNKSR family. Interacts with epithelial sodium channel ENaC. Interacts directly with SCNN1A (ENaC subunit alpha) and SCNN1B (ENaC subunit beta) C-terminal tails. Interacts with ENaC regulatory proteins NEDD4L, RAF1 and SGK1.

The protein localises to the cytoplasm. It localises to the apical cell membrane. Functionally, involved in transepithelial sodium transport. Regulates aldosterone-induced and epithelial sodium channel (ENaC)-mediated sodium transport through regulation of ENaC cell surface expression. Acts as a scaffold protein coordinating the assembly of an ENaC-regulatory complex (ERC). In Rattus norvegicus (Rat), this protein is Connector enhancer of kinase suppressor of ras 3 (Cnksr3).